The sequence spans 336 residues: Peroxidase 20 (336 aa).

The signal sequence occupies residues M1–G24. Disulfide bonds link C39-C119, C72-C77, C125-C331, and C204-C239. The active-site Proton acceptor is H70. Ca(2+)-binding residues include D71, V74, G76, D78, and S80. P167 serves as a coordination point for substrate. N170 carries an N-linked (GlcNAc...) asparagine glycan. H197 provides a ligand contact to heme b. T198 is a binding site for Ca(2+). 3 residues coordinate Ca(2+): D252, T255, and D260.

Belongs to the peroxidase family. Classical plant (class III) peroxidase subfamily. Heme b serves as cofactor. Requires Ca(2+) as cofactor.

The protein resides in the secreted. The catalysed reaction is 2 a phenolic donor + H2O2 = 2 a phenolic radical donor + 2 H2O. Functionally, removal of H(2)O(2), oxidation of toxic reductants, biosynthesis and degradation of lignin, suberization, auxin catabolism, response to environmental stresses such as wounding, pathogen attack and oxidative stress. These functions might be dependent on each isozyme/isoform in each plant tissue. Its function is as follows. May be implicated in the systemic acquired resistance response via the salicylic acid signal transduction pathway. The sequence is that of Peroxidase 20 (PER20) from Arabidopsis thaliana (Mouse-ear cress).